The primary structure comprises 204 residues: tRNA (pseudouridine(54)-N(1))-methyltransferase (204 aa).

S-adenosyl-L-methionine contacts are provided by Leu-136 and Gly-158.

This sequence belongs to the methyltransferase superfamily. TrmY family. Homodimer.

It localises to the cytoplasm. It catalyses the reaction pseudouridine(54) in tRNA + S-adenosyl-L-methionine = N(1)-methylpseudouridine(54) in tRNA + S-adenosyl-L-homocysteine + H(+). Functionally, specifically catalyzes the N1-methylation of pseudouridine at position 54 (Psi54) in tRNAs. The chain is tRNA (pseudouridine(54)-N(1))-methyltransferase from Pyrococcus abyssi (strain GE5 / Orsay).